The sequence spans 115 residues: NADH-ubiquinone oxidoreductase chain 3 (115 aa).

3 helical membrane-spanning segments follow: residues 3 to 23 (LMLT…IAFW), 55 to 75 (FFLV…LLPL), and 84 to 104 (LNTM…SLAY).

This sequence belongs to the complex I subunit 3 family. Core subunit of respiratory chain NADH dehydrogenase (Complex I) which is composed of 45 different subunits. Interacts with TMEM186. Interacts with TMEM242.

The protein resides in the mitochondrion inner membrane. The enzyme catalyses a ubiquinone + NADH + 5 H(+)(in) = a ubiquinol + NAD(+) + 4 H(+)(out). Functionally, core subunit of the mitochondrial membrane respiratory chain NADH dehydrogenase (Complex I) which catalyzes electron transfer from NADH through the respiratory chain, using ubiquinone as an electron acceptor. Essential for the catalytic activity of complex I. This chain is NADH-ubiquinone oxidoreductase chain 3, found in Equus caballus (Horse).